A 562-amino-acid polypeptide reads, in one-letter code: Malate synthase (562 aa).

Residue Arg177 is the Proton acceptor of the active site. Catalysis depends on Asp463, which acts as the Proton donor. A Microbody targeting signal motif is present at residues Ser560–Leu562.

The protein belongs to the malate synthase family.

Its subcellular location is the glyoxysome. It catalyses the reaction glyoxylate + acetyl-CoA + H2O = (S)-malate + CoA + H(+). It participates in carbohydrate metabolism; glyoxylate cycle; (S)-malate from isocitrate: step 2/2. Its function is as follows. Does not seem to be essential for lipid utilization and gluconeogenesis in seedlings. The polypeptide is Malate synthase (Arabidopsis thaliana (Mouse-ear cress)).